Consider the following 255-residue polypeptide: Type III pantothenate kinase (255 aa).

Asp6–Lys13 is an ATP binding site. Residue Gly107–Arg110 participates in substrate binding. The active-site Proton acceptor is Asp109. Thr132 is an ATP binding site. Thr184 is a binding site for substrate.

Belongs to the type III pantothenate kinase family. As to quaternary structure, homodimer. The cofactor is NH4(+). It depends on K(+) as a cofactor.

It localises to the cytoplasm. It catalyses the reaction (R)-pantothenate + ATP = (R)-4'-phosphopantothenate + ADP + H(+). Its pathway is cofactor biosynthesis; coenzyme A biosynthesis; CoA from (R)-pantothenate: step 1/5. Its function is as follows. Catalyzes the phosphorylation of pantothenate (Pan), the first step in CoA biosynthesis. This Roseiflexus castenholzii (strain DSM 13941 / HLO8) protein is Type III pantothenate kinase.